The following is a 489-amino-acid chain: Protein LMBR1L (489 aa).

Topologically, residues 1–21 (MEAADYEVLSVREQLFHDRVR) are extracellular. Residues 1 to 59 (MEAADYEVLSVREQLFHDRVRECIISILLFATLYILCHIFLTRFKKPAEFTTVDDEDAT) are interaction with LGB. An LCN1-binding region spans residues 1 to 76 (MEAADYEVLS…LCTFTLAVAL (76 aa)). Residues 22–42 (ECIISILLFATLYILCHIFLT) traverse the membrane as a helical segment. Topologically, residues 43-66 (RFKKPAEFTTVDDEDATVNKIALE) are cytoplasmic. A helical membrane pass occupies residues 67–87 (LCTFTLAVALGAVLLLPFSII). The Extracellular segment spans residues 88 to 114 (SNEVLLSLPRNYYIQWLNGSLIHGLWN). Residues 115 to 135 (LVFLFSNLSLVFLMPFAYFFT) form a helical membrane-spanning segment. The Cytoplasmic segment spans residues 136 to 154 (ESEGFAGSRKGVLGRVYET). A helical transmembrane segment spans residues 155-175 (VVMLILLTLLVLGMVWVASAI). The Extracellular segment spans residues 176–196 (VDNDKASRESLYDFWEYYLPY). Residues 197–217 (LYSCISFLGVLLLLVCTPLGL) form a helical membrane-spanning segment. Over 218–305 (ARMFSVTGKL…NLGYPLAMLC (88 aa)) the chain is Cytoplasmic. The helical transmembrane segment at 306-326 (LLVLTGLSVLIVAVHILELLI) threads the bilayer. Residues 327 to 350 (DEAAMPRGMQDAALGQASFSKLGS) lie on the Extracellular side of the membrane. The helical transmembrane segment at 351-371 (FGAIIQVVLIFYLMVSSVVGF) threads the bilayer. Topologically, residues 372–388 (YSSPLFGSLRPRWHDTS) are cytoplasmic. Residues 389-409 (MTQIIGNCVCLLVLSSALPVF) traverse the membrane as a helical segment. Over 410 to 431 (SRTLGLTRFDLLGDFGRFNWLG) the chain is Extracellular. The chain crosses the membrane as a helical span at residues 432-452 (NFYIVFLYNAAFAGLTTLCLV). Over 453–489 (KTFTAAVRAELIRAFGLDRLPLPVSGFPRASRKKQHQ) the chain is Cytoplasmic.

This sequence belongs to the LIMR family. As to quaternary structure, dimer. Can also form higher oligomers. Interacts with LCN1; this interaction mediates the endocytosis of LCN1. Interacts with UBAC2, FAF2, VCP, AMFR, ZNRF3, CTNNB1, LRP6, GSK3B, FZD6, DVL2 and RNF43. Interacts with GSK3A. Interaction with LGB and SCGB1A1 is controversial. Highly expressed in the bone marrow, thymus, spleen and lymphocytes.

It is found in the cell membrane. It localises to the endoplasmic reticulum membrane. Functionally, plays an essential role in lymphocyte development by negatively regulating the canonical Wnt signaling pathway. In association with UBAC2 and E3 ubiquitin-protein ligase AMFR, promotes the ubiquitin-mediated degradation of CTNNB1 and Wnt receptors FZD6 and LRP6. LMBR1L stabilizes the beta-catenin destruction complex that is required for regulating CTNNB1 levels. Acts as a LCN1 receptor and can mediate its endocytosis. This Mus musculus (Mouse) protein is Protein LMBR1L (Lmbr1l).